The primary structure comprises 474 residues: tRNA-2-methylthio-N(6)-dimethylallyladenosine synthase (474 aa).

Residues 3–120 enclose the MTTase N-terminal domain; that stretch reads KKLHIKTWGC…LPEMINHVQG (118 aa). Cys-12, Cys-49, Cys-83, Cys-157, Cys-161, and Cys-164 together coordinate [4Fe-4S] cluster. The region spanning 143–375 is the Radical SAM core domain; that stretch reads RAEGPTAFVS…QQRISQQAME (233 aa). In terms of domain architecture, TRAM spans 378–441; the sequence is RKMVGTVQRV…ASSLRGILLR (64 aa).

This sequence belongs to the methylthiotransferase family. MiaB subfamily. In terms of assembly, monomer. The cofactor is [4Fe-4S] cluster.

Its subcellular location is the cytoplasm. It carries out the reaction N(6)-dimethylallyladenosine(37) in tRNA + (sulfur carrier)-SH + AH2 + 2 S-adenosyl-L-methionine = 2-methylsulfanyl-N(6)-dimethylallyladenosine(37) in tRNA + (sulfur carrier)-H + 5'-deoxyadenosine + L-methionine + A + S-adenosyl-L-homocysteine + 2 H(+). Its function is as follows. Catalyzes the methylthiolation of N6-(dimethylallyl)adenosine (i(6)A), leading to the formation of 2-methylthio-N6-(dimethylallyl)adenosine (ms(2)i(6)A) at position 37 in tRNAs that read codons beginning with uridine. The polypeptide is tRNA-2-methylthio-N(6)-dimethylallyladenosine synthase (Yersinia pseudotuberculosis serotype O:1b (strain IP 31758)).